The chain runs to 664 residues: MSSRKHLANAIRALSMDGVQQANSGHPGAPMGMADIAEVLWRSHLNHNPANPEWADRDRFVLSNGHGSMLIYSLLHLSGYELSIDDLKNFRQLHSKTPGHPEYGYAPGIETTTGPLGQGITNAVGMALAEKALAAQFNKEGHDIIDHFTYVFMGDGCLMEGISHEACSLAGTLGLGKLIAFWDDNGISIDGHVEGWFSDDTPKRFEAYGWHVIPAVDGHDSDAINAAIEAAKADPRPTLICTKTIIGFGSPNKSGSHDCHGAPLGAEEIAAAREFLGWEHPAFEIPADVYAEWDAKAAGAEKEAAWNAKFEAYAAAYPTEAAELKRRLNGELPAEWEEKANQIIADLQANPANIASRKASQNALEAFGQMLPEFMGGSADLAPSNLTMWSGSKSLEANDFSGNYIHYGVREFGMTAIMNGIALHGGFVPYGATFLMFMEYARNAMRMAALMKIQNIQVYTHDSIGLGEDGPTHQPVEQMASLRLTPNMNTWRPCDQVESAVAWKLAIERKDAPTALIFSRQNLAQQERTAEQVTDIAKGGYILKDSDGKPELILIATGSEVELAVKAAEQLTAEGKKVRVVSMPSTDAFDKQDAAYREAVLPSDVTARIAIEAGIADFWYKYVGFDGRIIGMTTFGESAPADQLFEMFGFTVENVVNTAKELLA.

H26 contributes to the substrate binding site. Thiamine diphosphate contacts are provided by residues H66 and 114-116 (GPL). D155 is a binding site for Mg(2+). Thiamine diphosphate-binding residues include G156 and N185. Mg(2+) is bound by residues N185 and I187. Residues H260, R357, and S384 each contribute to the substrate site. H260 provides a ligand contact to thiamine diphosphate. Residue E411 is the Proton donor of the active site. Thiamine diphosphate is bound at residue F437. H461, D469, and R520 together coordinate substrate.

It belongs to the transketolase family. As to quaternary structure, homodimer. Mg(2+) is required as a cofactor. It depends on Ca(2+) as a cofactor. Requires Mn(2+) as cofactor. Co(2+) serves as cofactor. The cofactor is thiamine diphosphate.

It carries out the reaction D-sedoheptulose 7-phosphate + D-glyceraldehyde 3-phosphate = aldehydo-D-ribose 5-phosphate + D-xylulose 5-phosphate. In terms of biological role, catalyzes the transfer of a two-carbon ketol group from a ketose donor to an aldose acceptor, via a covalent intermediate with the cofactor thiamine pyrophosphate. This Vibrio parahaemolyticus serotype O3:K6 (strain RIMD 2210633) protein is Transketolase 1 (tkt1).